The sequence spans 222 residues: Lipid transferase CIDEC (222 aa).

Residues 1 to 19 (MAMYTAVSTSVVTQQQLSE) are compositionally biased toward polar residues. Disordered regions lie at residues 1–33 (MAMY…CRVT) and 203–222 (EQPP…KMLQ). The interval 1 to 33 (MAMYTAVSTSVVTQQQLSEPSAEAPRARPCRVT) is required for liquid-liquid phase separation (LLPS). One can recognise a CIDE-N domain in the interval 26–103 (RARPCRVTTA…VLHKGQKWQP (78 aa)).

This sequence belongs to the CIDE family. Homodimer. Homooligomer; undergoes liquid-liquid phase separation (LLPS) via its N-terminus, facilitating lipid droplet fusion, occurs at the lipid droplet contact sites. Interacts with CIDEA. Interacts with PLIN1. Interacts with NFAT5; this interaction is direct and retains NFAT5 in the cytoplasm. Interacts with CEBPB. Interacts with isoform CLSTN3beta of CLSTN3; inhibiting the lipid transferase activity of CIDEC. Ubiquitinated and targeted to proteasomal degradation, resulting in a short half-life (about 15 minutes in 3T3-L1 cells). Protein stability depends on triaclyglycerol synthesis, fatty acid availability and lipid droplet formation.

The protein resides in the lipid droplet. The protein localises to the endoplasmic reticulum. Its subcellular location is the nucleus. The catalysed reaction is a triacyl-sn-glycerol(in) = a triacyl-sn-glycerol(out). In terms of biological role, lipid transferase specifically expressed in white adipose tissue, which promotes unilocular lipid droplet formation by mediating lipid droplet fusion. Lipid droplet fusion promotes their enlargement, restricting lipolysis and favoring lipid storage. Localizes on the lipid droplet surface, at focal contact sites between lipid droplets, and mediates atypical lipid droplet fusion by undergoing liquid-liquid phase separation (LLPS) and promoting directional net neutral lipid transfer from the smaller to larger lipid droplets. The transfer direction may be driven by the internal pressure difference between the contacting lipid droplet pair. Its role in neutral lipid transfer and lipid droplet enlargement is activated by the interaction with PLIN1. May also act as a CEBPB coactivator in the white adipose tissue to control the expression of a subset of CEBPB downstream target genes, including SOCS1, SOCS3, TGFB1, TGFBR1, ID2 and XDH. When overexpressed in preadipocytes, induces apoptosis or increases cell susceptibility to apoptosis induced by serum deprivation or TGFB treatment. In Bos taurus (Bovine), this protein is Lipid transferase CIDEC.